A 168-amino-acid polypeptide reads, in one-letter code: uncharacterized protein (168 aa).

Disordered regions lie at residues 1 to 35 (MGSS…KKLD), 48 to 97 (KVKK…DKGN), and 126 to 168 (ASIT…GLGM). Positions 29-95 (KEKKKLDEKE…KNSLSRSQDK (67 aa)) form a coiled coil. Basic and acidic residues predominate over residues 68-85 (LAEDPMVKNVAENDHDQM). The segment covering 126 to 139 (ASITESSPSAQSNK) has biased composition (polar residues). Residues 140–150 (TNDKQREKELE) show a composition bias toward basic and acidic residues. Positions 157–168 (VLHKGTKKGLGM) are enriched in basic residues.

This is an uncharacterized protein from Schizosaccharomyces pombe (strain 972 / ATCC 24843) (Fission yeast).